The chain runs to 671 residues: cGMP-dependent protein kinase 1 (671 aa).

N-acetylserine is present on Ser-2. A coiled-coil region spans residues 2–59; sequence SELEEDFAKILMLKEERIKELEKRLSEKEEEIQELKRKLHKCQSVLPVPSTHIGPRTT. The interval 2-102 is required for dimerization; it reads SELEEDFAKI…LIKEAILDND (101 aa). Positions 9 to 44 are leucine-zipper; it reads AKILMLKEERIKELEKRLSEKEEEIQELKRKLHKCQ. The autoinhibitory domain stretch occupies residues 50-75; sequence PSTHIGPRTTRAQGISAEPQTYRSFH. Thr-59 is modified (phosphothreonine; by autocatalysis). The interval 103–220 is cGMP-binding, high affinity; it reads FMKNLELSQI…EYMEFLKSVP (118 aa). 3',5'-cyclic AMP is bound by residues 167-170 and 177-178; these read GELA and RT. 3',5'-cyclic GMP contacts are provided by residues 167–170, 177–178, Arg-282, 291–294, 301–302, and Tyr-336; these read GELA, RT, and GEKA. A cGMP-binding, low affinity region spans residues 221–341; sequence TFQSLPEEIL…SNKAYEDAEA (121 aa). 3',5'-cyclic AMP is bound by residues 291-294, 301-302, and Tyr-336; these read GEKA and RT. The 260-residue stretch at 360-619 folds into the Protein kinase domain; it reads FNIIDTLGVG…VKDIQKHKWF (260 aa). ATP contacts are provided by residues 366 to 374 and Lys-390; that span reads LGVGGFGRV. Asp-484 acts as the Proton acceptor in catalysis. Thr-515 is modified (phosphothreonine). The AGC-kinase C-terminal domain occupies 620–671; it reads EGFNWEGLRKGTLTPPIIPSVASPTDTSNFDSFPEDNDEPPPDDNSGWDIDF. The tract at residues 635-671 is disordered; the sequence is PIIPSVASPTDTSNFDSFPEDNDEPPPDDNSGWDIDF. Residues 652–661 show a composition bias toward acidic residues; it reads FPEDNDEPPP.

This sequence belongs to the protein kinase superfamily. AGC Ser/Thr protein kinase family. cGMP subfamily. Isoform alpha: parallel homodimer or heterodimer and also heterotetramer. Interacts directly with PPP1R12A. Non-covalent dimer of dimer of PRKG1-PRKG1 and PPP1R12A-PPP1R12A. This interaction targets PRKG1 to stress fibers to mediate smooth muscle cell relaxation and vasodilation in responses to rises in cGMP. Isoform beta: antiparallel homodimer. Part of cGMP kinase signaling complex at least composed of ACTA2/alpha-actin, CNN1/calponin H1, PLN/phospholamban, PRKG1 and ITPR1. Interacts with IRAG1. Forms a stable complex with ITPR1, IRAG1, and isoform beta of PRKG1. Interacts with TRPC7 (via ankyrin repeat domain). Isoform alpha interacts with RGS2. Interacts with GTF2I. In terms of processing, autophosphorylation increases kinase activity. Post-translationally, 65 kDa monomer is produced by proteolytic cleavage. In terms of tissue distribution, primarily expressed in lung and placenta.

It is found in the cytoplasm. The catalysed reaction is L-seryl-[protein] + ATP = O-phospho-L-seryl-[protein] + ADP + H(+). The enzyme catalyses L-threonyl-[protein] + ATP = O-phospho-L-threonyl-[protein] + ADP + H(+). With respect to regulation, in the absence of cGMP, PRKG1 activity is suppressed by autoinhibitory contacts. In terms of biological role, serine/threonine protein kinase that acts as a key mediator of the nitric oxide (NO)/cGMP signaling pathway. GMP binding activates PRKG1, which phosphorylates serines and threonines on many cellular proteins. Numerous protein targets for PRKG1 phosphorylation are implicated in modulating cellular calcium, but the contribution of each of these targets may vary substantially among cell types. Proteins that are phosphorylated by PRKG1 regulate platelet activation and adhesion, smooth muscle contraction, cardiac function, gene expression, feedback of the NO-signaling pathway, and other processes involved in several aspects of the CNS like axon guidance, hippocampal and cerebellar learning, circadian rhythm and nociception. Smooth muscle relaxation is mediated through lowering of intracellular free calcium, by desensitization of contractile proteins to calcium, and by decrease in the contractile state of smooth muscle or in platelet activation. Regulates intracellular calcium levels via several pathways: phosphorylates IRAG1 and inhibits IP3-induced Ca(2+) release from intracellular stores, phosphorylation of KCNMA1 (BKCa) channels decreases intracellular Ca(2+) levels, which leads to increased opening of this channel. PRKG1 phosphorylates the canonical transient receptor potential channel (TRPC) family which inactivates the associated inward calcium current. Another mode of action of NO/cGMP/PKGI signaling involves PKGI-mediated inactivation of the Ras homolog gene family member A (RhoA). Phosphorylation of RHOA by PRKG1 blocks the action of this protein in myriad processes: regulation of RHOA translocation; decreasing contraction; controlling vesicle trafficking, reduction of myosin light chain phosphorylation resulting in vasorelaxation. Activation of PRKG1 by NO signaling also alters gene expression in a number of tissues. In smooth muscle cells, increased cGMP and PRKG1 activity influence expression of smooth muscle-specific contractile proteins, levels of proteins in the NO/cGMP signaling pathway, down-regulation of the matrix proteins osteopontin and thrombospondin-1 to limit smooth muscle cell migration and phenotype. Regulates vasodilator-stimulated phosphoprotein (VASP) functions in platelets and smooth muscle. This Homo sapiens (Human) protein is cGMP-dependent protein kinase 1 (PRKG1).